A 267-amino-acid chain; its full sequence is Formamidopyrimidine-DNA glycosylase (267 aa).

Proline 2 acts as the Schiff-base intermediate with DNA in catalysis. Glutamate 3 (proton donor) is an active-site residue. Lysine 58 serves as the catalytic Proton donor; for beta-elimination activity. Residues histidine 91, arginine 110, and arginine 152 each coordinate DNA. An FPG-type zinc finger spans residues 233-267; that stretch reads DVYGRGTDACTRCGGALEEIRLGNRSTVFCPRCQT. Arginine 257 functions as the Proton donor; for delta-elimination activity in the catalytic mechanism.

Belongs to the FPG family. As to quaternary structure, monomer. Zn(2+) serves as cofactor.

The enzyme catalyses Hydrolysis of DNA containing ring-opened 7-methylguanine residues, releasing 2,6-diamino-4-hydroxy-5-(N-methyl)formamidopyrimidine.. The catalysed reaction is 2'-deoxyribonucleotide-(2'-deoxyribose 5'-phosphate)-2'-deoxyribonucleotide-DNA = a 3'-end 2'-deoxyribonucleotide-(2,3-dehydro-2,3-deoxyribose 5'-phosphate)-DNA + a 5'-end 5'-phospho-2'-deoxyribonucleoside-DNA + H(+). Functionally, involved in base excision repair of DNA damaged by oxidation or by mutagenic agents. Acts as a DNA glycosylase that recognizes and removes damaged bases. Has a preference for oxidized purines, such as 7,8-dihydro-8-oxoguanine (8-oxoG). Has AP (apurinic/apyrimidinic) lyase activity and introduces nicks in the DNA strand. Cleaves the DNA backbone by beta-delta elimination to generate a single-strand break at the site of the removed base with both 3'- and 5'-phosphates. The sequence is that of Formamidopyrimidine-DNA glycosylase from Geobacter metallireducens (strain ATCC 53774 / DSM 7210 / GS-15).